We begin with the raw amino-acid sequence, 205 residues long: MIVQFFNRGKGGGSGPIDYLLGKDRDREEARLLRGDPEETAALINSSDYAKKYTAGCLSFEESNIPAEQKHALMDSFEECIFAGLDKDQYNCLWVEHRDKGRLELNFVIPNIELLSGKRLQPYYYAADRGRVDAWRTMQNLTHGYSDPDDPAKRQSMTQAKDLPRNTQEAAQSITEHHRRLRSPSPIRQAKKPRRRAGNAGKGRF.

A disordered region spans residues Thr-142 to Phe-205. Over residues Gln-155 to Ile-174 the composition is skewed to polar residues. Basic residues predominate over residues Gln-189 to Phe-205.

The protein is Cryptic plasmid protein C (cppC) of Neisseria gonorrhoeae.